The chain runs to 702 residues: Polyphosphate kinase (702 aa).

Residue N55 coordinates ATP. Positions 389 and 419 each coordinate Mg(2+). The Phosphohistidine intermediate role is filled by H449. 3 residues coordinate ATP: Y482, R578, and H606.

This sequence belongs to the polyphosphate kinase 1 (PPK1) family. Mg(2+) serves as cofactor. In terms of processing, an intermediate of this reaction is the autophosphorylated ppk in which a phosphate is covalently linked to a histidine residue through a N-P bond.

The catalysed reaction is [phosphate](n) + ATP = [phosphate](n+1) + ADP. In terms of biological role, catalyzes the reversible transfer of the terminal phosphate of ATP to form a long-chain polyphosphate (polyP). The chain is Polyphosphate kinase from Bacillus cereus (strain ATCC 14579 / DSM 31 / CCUG 7414 / JCM 2152 / NBRC 15305 / NCIMB 9373 / NCTC 2599 / NRRL B-3711).